A 669-amino-acid chain; its full sequence is DNA mismatch repair protein MutL (669 aa).

The disordered stretch occupies residues 356-382; it reads FEQRQNTENNQEKTFSSEESNSKPFME. Residues 361-378 show a composition bias toward polar residues; it reads NTENNQEKTFSSEESNSK.

The protein belongs to the DNA mismatch repair MutL/HexB family.

Its function is as follows. This protein is involved in the repair of mismatches in DNA. It is required for dam-dependent methyl-directed DNA mismatch repair. May act as a 'molecular matchmaker', a protein that promotes the formation of a stable complex between two or more DNA-binding proteins in an ATP-dependent manner without itself being part of a final effector complex. This chain is DNA mismatch repair protein MutL, found in Staphylococcus aureus (strain USA300).